A 212-amino-acid chain; its full sequence is Regulatory protein RecX (212 aa).

It belongs to the RecX family.

It is found in the cytoplasm. In terms of biological role, modulates RecA activity. The chain is Regulatory protein RecX from Clostridium perfringens (strain SM101 / Type A).